The chain runs to 299 residues: Protease HtpX homolog (299 aa).

2 consecutive transmembrane segments (helical) span residues 19–39 (LFIVTFSLILFAIGYFFVWYF) and 41–61 (WGLTGIVLLAIFIVLYNWIAY). Histidine 146 is a binding site for Zn(2+). Glutamate 147 is a catalytic residue. Histidine 150 provides a ligand contact to Zn(2+). Transmembrane regions (helical) follow at residues 156 to 176 (ILLMTVVAVVAGLIILLRDVM) and 198 to 218 (IILLIIGLIFSIIAPLIVLII). Residue glutamate 227 participates in Zn(2+) binding.

It belongs to the peptidase M48B family. Requires Zn(2+) as cofactor.

The protein resides in the cell membrane. In Thermoanaerobacter pseudethanolicus (strain ATCC 33223 / 39E) (Clostridium thermohydrosulfuricum), this protein is Protease HtpX homolog.